The sequence spans 381 residues: Dihydroorotate dehydrogenase (quinone) (381 aa).

FMN-binding positions include 77–81 (AGCDK) and Ala-101. A substrate-binding site is contributed by Lys-81. 126–129 (NRLG) is a substrate binding site. Residues Asn-158 and Asn-191 each coordinate FMN. Residue Asn-191 participates in substrate binding. Catalysis depends on Ser-194, which acts as the Nucleophile. Asn-196 is a binding site for substrate. The FMN site is built by Lys-229 and Thr-257. 258 to 259 (NT) contacts substrate. FMN-binding positions include Gly-287, Gly-316, and 337–338 (YT).

This sequence belongs to the dihydroorotate dehydrogenase family. Type 2 subfamily. As to quaternary structure, monomer. Requires FMN as cofactor.

The protein resides in the cell membrane. It catalyses the reaction (S)-dihydroorotate + a quinone = orotate + a quinol. The protein operates within pyrimidine metabolism; UMP biosynthesis via de novo pathway; orotate from (S)-dihydroorotate (quinone route): step 1/1. In terms of biological role, catalyzes the conversion of dihydroorotate to orotate with quinone as electron acceptor. The chain is Dihydroorotate dehydrogenase (quinone) (pyrD) from Synechocystis sp. (strain ATCC 27184 / PCC 6803 / Kazusa).